Consider the following 183-residue polypeptide: Copper metallothionein 2 (183 aa).

Residues 1–35 (MAFNPNPEKTTSCCSTSKAQDKCTCPKGKCECETC) form a cys-rich copper-binding 1 region. The spacer B1 stretch occupies residues 36 to 45 (PKSTKTPGSG). A cys-rich copper-binding 2 region spans residues 46-79 (PCNCGVKEKVSTCGCNGSGAACTCPPGQCACDSC). Residues 80 to 88 (PRKAKSVST) form a spacer B2 region. Positions 89–110 (CGCGGSAAACSCPPGKCACDSC) are cys-rich copper-binding 3. Positions 111-120 (PKQAQEKVSS) are spacer B3. The segment at 121-142 (CACNGSGGACTCPPGKCSCSGC) is cys-rich copper-binding 4. The tract at residues 143 to 156 (PAQAKENPADQPTT) is spacer B4. The cys-rich copper-binding 5 stretch occupies residues 157–183 (CGCQGVGVACTCPPGQCACDGCPAKAK).

It belongs to the metallothionein superfamily.

The protein resides in the cytoplasm. It localises to the cell cortex. In terms of biological role, copper metallothionein that protects the cell against copper toxicity by tightly chelating copper ions. Required for antioxidant-mediated growth rescue in the presence of fluconazole. Acts as a critical factors for lung colonization and virulence. In Cryptococcus neoformans var. grubii serotype A (strain H99 / ATCC 208821 / CBS 10515 / FGSC 9487) (Filobasidiella neoformans var. grubii), this protein is Copper metallothionein 2.